Consider the following 373-residue polypeptide: MKQTLLSLSNLTKQFDGKKVLDSLDLDIFDGEFITLLGPSGCGKTTLLRMMAGFEHPDDGTIALGDQDLTHTPPEHRPLNTVFQNYALFPHMSVFDNVAYGLKMEKRPKQEIRERVEDALAMVQLEDFARRKPHQLSGGQQQRVAIARAVVKRPKVLLLDEPLSALDYKLRRTMQVELKRLQRELGITFVFVTHDQEEALSMSDRVVVLKDGLIQQLGTPREVYERPANLFTARFVGETNFFPGRVDKANGDDTITVDVFGLKRTFRKPDFPVSGGQSLHVLLRPEDIRVLAPDDEDGVAGKIVERNYKGSTLDSVIHLEDGTEVLASEFFDEDDPTFDYRLGEPVKVSWVDGWEWLLPTEPEALPEEEGTDA.

Positions 6–236 constitute an ABC transporter domain; sequence LSLSNLTKQF…PANLFTARFV (231 aa). 38–45 is a binding site for ATP; the sequence is GPSGCGKT.

The protein belongs to the ABC transporter superfamily. Spermidine/putrescine importer (TC 3.A.1.11.1) family. As to quaternary structure, the complex is composed of two ATP-binding proteins (PotA), two transmembrane proteins (PotB and PotC) and a solute-binding protein (PotD).

Its subcellular location is the cell inner membrane. It carries out the reaction ATP + H2O + polyamine-[polyamine-binding protein]Side 1 = ADP + phosphate + polyamineSide 2 + [polyamine-binding protein]Side 1.. Functionally, part of the ABC transporter complex PotABCD involved in spermidine/putrescine import. Responsible for energy coupling to the transport system. The chain is Spermidine/putrescine import ATP-binding protein PotA from Marinobacter nauticus (strain ATCC 700491 / DSM 11845 / VT8) (Marinobacter aquaeolei).